A 595-amino-acid polypeptide reads, in one-letter code: Leiomodin-1 (595 aa).

3 disordered regions span residues 1-69 (MSKV…EAML), 81-322 (QREM…KVKN), and 467-568 (DKQR…QEKN). S12 is modified (phosphoserine). A compositionally biased stretch (acidic residues) spans 27 to 40 (EEMEELEKELDVVD). Basic and acidic residues-rich tracts occupy residues 81 to 110 (QREMSVDESKQVGRKTDAKNGEEKDSDASR), 117 to 127 (QDSDLGKEPKK), 134 to 192 (FSRD…EKTG), 200 to 223 (SRDKDKKKEEVKEPSKKEEVKLTA), 230 to 249 (GRREDGRLKESSKENKKPED), 257 to 287 (RDWRKEDEKVKKEENQPDKEVREESKTKAPE), 467 to 476 (DKQRQKRLQE), and 484 to 493 (SGEKKDRLEV). S85 carries the phosphoserine modification. The residue at position 135 (S135) is a Phosphoserine. A run of 8 repeats spans residues 165–179 (AAVDRKESGKDGREE), 180–195 (RAAAARKEEEKTGSVK), 196–211 (NAGLSRDKDKKKEEVK), 212–226 (EPSKKEEVKLTAESR), 227–240 (NTVGRREDGRLKES), 242–255 (KENKKPEDEGIGSG), 256–271 (GRDWRKEDEKVKKEEN), and 272–288 (QPDKEVREESKTKAPEK). Residues 165-288 (AAVDRKESGK…EESKTKAPEK (124 aa)) are 8 X approximate tandem repeats. The segment at 503–522 (SPKPSPQPSPKPAPKNSPKK) is 5 X 4 AA approximate tandem repeats. Pro residues-rich tracts occupy residues 505 to 517 (KPSPQPSPKPAPK) and 527 to 538 (AAPPPPPPPLAP). At S550 the chain carries Phosphoserine. Residues 569-588 (SRDQLLAAIRSSNLKQLKKV) enclose the WH2 domain.

The protein belongs to the tropomodulin family. In terms of tissue distribution, detected in aorta, urinary bladder and uterus (at protein level). Detected in smooth muscle cells. Detected in aorta, bladder, colon, intestine, stomach and uterus.

The protein localises to the cytoplasm. It is found in the myofibril. The protein resides in the sarcomere. It localises to the cytoskeleton. Its function is as follows. Required for proper contractility of visceral smooth muscle cells. Mediates nucleation of actin filaments. In Mus musculus (Mouse), this protein is Leiomodin-1 (Lmod1).